Reading from the N-terminus, the 491-residue chain is tRNA-2-methylthio-N(6)-dimethylallyladenosine synthase (491 aa).

The MTTase N-terminal domain occupies 54-172 (KTYHIKTFGC…ILNLLEQVIF (119 aa)). [4Fe-4S] cluster is bound by residues Cys-63, Cys-99, Cys-133, Cys-209, Cys-213, and Cys-216. The Radical SAM core domain maps to 195–426 (RTNNLKGFVN…NEMVKTFSKK (232 aa)). In terms of domain architecture, TRAM spans 429–491 (EKYVNKVLDV…RFTLNGKMID (63 aa)).

The protein belongs to the methylthiotransferase family. MiaB subfamily. In terms of assembly, monomer. [4Fe-4S] cluster serves as cofactor.

It is found in the cytoplasm. It carries out the reaction N(6)-dimethylallyladenosine(37) in tRNA + (sulfur carrier)-SH + AH2 + 2 S-adenosyl-L-methionine = 2-methylsulfanyl-N(6)-dimethylallyladenosine(37) in tRNA + (sulfur carrier)-H + 5'-deoxyadenosine + L-methionine + A + S-adenosyl-L-homocysteine + 2 H(+). Functionally, catalyzes the methylthiolation of N6-(dimethylallyl)adenosine (i(6)A), leading to the formation of 2-methylthio-N6-(dimethylallyl)adenosine (ms(2)i(6)A) at position 37 in tRNAs that read codons beginning with uridine. This is tRNA-2-methylthio-N(6)-dimethylallyladenosine synthase from Malacoplasma penetrans (strain HF-2) (Mycoplasma penetrans).